The primary structure comprises 951 residues: Autophagy-related protein 9 (951 aa).

Positions 1-165 (MMTSNILSRF…APGPSSRADR (165 aa)) are disordered. Over 1–239 (MMTSNILSRF…NGIWSILLNR (239 aa)) the chain is Cytoplasmic. Residues 16–33 (SPSVYETLRQQDAESNPS) are compositionally biased toward polar residues. Basic and acidic residues predominate over residues 35–54 (VEERAGLEFEDDRRTQFSDR). Over residues 79-94 (FLTQRSPQRTSGTATA) the composition is skewed to polar residues. Over residues 97-108 (GGRRRKHSRPRW) the composition is skewed to basic residues. A helical transmembrane segment spans residues 240-260 (GLSLLTFAFVVGFSTFLTNCI). The Lumenal segment spans residues 261 to 288 (DYRNFRGSRKMDDILIQQCTKKMSMSST). A helical transmembrane segment spans residues 289 to 309 (FLLWLLTVFWIGKAFQYLMDI). Residues 310–455 (RRLKHMHDFY…KALSEGLRRR (146 aa)) lie on the Cytoplasmic side of the membrane. The stretch at 456-476 (FIFAGIMNIFVAPFIVVYFLM) is an intramembrane region. Residues 477–542 (HYFFRYFNEY…QFPKDKTVQV (66 aa)) lie on the Cytoplasmic side of the membrane. Residues 543–563 (AGFVAFVSGALASVLALVSII) traverse the membrane as a helical segment. Residues 564–577 (DPELFLGFEITHDR) are Lumenal-facing. A helical membrane pass occupies residues 578–598 (TVLFYLGVFGSVWAFARGLVP). The Cytoplasmic segment spans residues 599–644 (EETNVFDPEFALLEVIDFTHYFPNHWKGRLHSDEVRKEFAVLYQMK). Residues 645–665 (IVIFLEEILSMIFTPFILWFS) lie within the membrane without spanning it. Residues 666 to 951 (LPKCSDRLID…DNRGRTTVGI (286 aa)) are Cytoplasmic-facing. Positions 848–897 (SRPVRPITDPIEDDNESPSAEIRRGAVKKSPHTTTGSSGGAIGTSDSNLG) are disordered.

This sequence belongs to the ATG9 family. Homotrimer; forms a homotrimer with a central pore that forms a path between the two membrane leaflets. Post-translationally, phosphorylated by atg1. Atg1 phosphorylation is required for preautophagosome elongation.

Its subcellular location is the preautophagosomal structure membrane. It is found in the cytoplasmic vesicle membrane. The protein localises to the golgi apparatus membrane. It localises to the endoplasmic reticulum membrane. It carries out the reaction a 1,2-diacyl-sn-glycero-3-phosphocholine(in) = a 1,2-diacyl-sn-glycero-3-phosphocholine(out). It catalyses the reaction a 1,2-diacyl-sn-glycero-3-phospho-L-serine(in) = a 1,2-diacyl-sn-glycero-3-phospho-L-serine(out). The enzyme catalyses a 1,2-diacyl-sn-glycero-3-phosphoethanolamine(in) = a 1,2-diacyl-sn-glycero-3-phosphoethanolamine(out). The catalysed reaction is a 1,2-diacyl-sn-glycero-3-phospho-(1D-myo-inositol-3-phosphate)(in) = a 1,2-diacyl-sn-glycero-3-phospho-(1D-myo-inositol-3-phosphate)(out). In terms of biological role, phospholipid scramblase involved in autophagy and cytoplasm to vacuole transport (Cvt) vesicle formation. Cycles between the preautophagosomal structure/phagophore assembly site (PAS) and the cytoplasmic vesicle pool and supplies membrane for the growing autophagosome. Lipid scramblase activity plays a key role in preautophagosomal structure/phagophore assembly by distributing the phospholipids that arrive through atg2 from the cytoplasmic to the luminal leaflet of the bilayer, thereby driving autophagosomal membrane expansion. Required for mitophagy. Also involved in endoplasmic reticulum-specific autophagic process and is essential for the survival of cells subjected to severe ER stress. Different machineries are required for anterograde trafficking to the PAS during either the Cvt pathway or bulk autophagy and for retrograde trafficking. The chain is Autophagy-related protein 9 (atg9) from Aspergillus oryzae (strain ATCC 42149 / RIB 40) (Yellow koji mold).